Reading from the N-terminus, the 530-residue chain is Phosphoenolpyruvate carboxykinase (ATP) (530 aa).

Substrate-binding residues include R58, Y195, and K201. Residues K201, H220, and G236–T244 contribute to the ATP site. K201 and H220 together coordinate Mn(2+). D257 provides a ligand contact to Mn(2+). Residues E285, R321, R440–I441, and T446 each bind ATP. R321 lines the substrate pocket.

It belongs to the phosphoenolpyruvate carboxykinase (ATP) family. Mn(2+) is required as a cofactor.

Its subcellular location is the cytoplasm. It carries out the reaction oxaloacetate + ATP = phosphoenolpyruvate + ADP + CO2. It functions in the pathway carbohydrate biosynthesis; gluconeogenesis. Functionally, involved in the gluconeogenesis. Catalyzes the conversion of oxaloacetate (OAA) to phosphoenolpyruvate (PEP) through direct phosphoryl transfer between the nucleoside triphosphate and OAA. The polypeptide is Phosphoenolpyruvate carboxykinase (ATP) (Staphylococcus aureus (strain Mu3 / ATCC 700698)).